Reading from the N-terminus, the 96-residue chain is Large ribosomal subunit protein bL28 (96 aa).

The tract at residues 1–21 (MSRVCELTGKGPMTGNNVSHA) is disordered.

It belongs to the bacterial ribosomal protein bL28 family.

In Jannaschia sp. (strain CCS1), this protein is Large ribosomal subunit protein bL28.